Reading from the N-terminus, the 216-residue chain is FMN-dependent NADH:quinone oxidoreductase (216 aa).

FMN contacts are provided by residues serine 10 and 15-17 (SIS).

The protein belongs to the azoreductase type 1 family. As to quaternary structure, homodimer. Requires FMN as cofactor.

It carries out the reaction 2 a quinone + NADH + H(+) = 2 a 1,4-benzosemiquinone + NAD(+). It catalyses the reaction N,N-dimethyl-1,4-phenylenediamine + anthranilate + 2 NAD(+) = 2-(4-dimethylaminophenyl)diazenylbenzoate + 2 NADH + 2 H(+). In terms of biological role, quinone reductase that provides resistance to thiol-specific stress caused by electrophilic quinones. Functionally, also exhibits azoreductase activity. Catalyzes the reductive cleavage of the azo bond in aromatic azo compounds to the corresponding amines. The sequence is that of FMN-dependent NADH:quinone oxidoreductase from Nocardia farcinica (strain IFM 10152).